The chain runs to 704 residues: Acetate--CoA ligase [ADP-forming] (704 aa).

The protein in the N-terminal section; belongs to the acetate CoA ligase alpha subunit family. In the C-terminal section; belongs to the acetate CoA ligase beta subunit family. In terms of assembly, homodimer.

The catalysed reaction is acetate + ATP + CoA = acetyl-CoA + ADP + phosphate. Catalyzes the formation of acetate and ATP from acetyl-CoA by using ADP and phosphate. Can also use butyryl-CoA, but not phenylacetyl-CoA. Cannot catalyze the reverse reaction. In Methanocaldococcus jannaschii (strain ATCC 43067 / DSM 2661 / JAL-1 / JCM 10045 / NBRC 100440) (Methanococcus jannaschii), this protein is Acetate--CoA ligase [ADP-forming].